Consider the following 250-residue polypeptide: 1-(5-phosphoribosyl)-5-[(5-phosphoribosylamino)methylideneamino] imidazole-4-carboxamide isomerase (250 aa).

D8 (proton acceptor) is an active-site residue. The Proton donor role is filled by D129.

The protein belongs to the HisA/HisF family.

The protein resides in the cytoplasm. The enzyme catalyses 1-(5-phospho-beta-D-ribosyl)-5-[(5-phospho-beta-D-ribosylamino)methylideneamino]imidazole-4-carboxamide = 5-[(5-phospho-1-deoxy-D-ribulos-1-ylimino)methylamino]-1-(5-phospho-beta-D-ribosyl)imidazole-4-carboxamide. Its pathway is amino-acid biosynthesis; L-histidine biosynthesis; L-histidine from 5-phospho-alpha-D-ribose 1-diphosphate: step 4/9. The polypeptide is 1-(5-phosphoribosyl)-5-[(5-phosphoribosylamino)methylideneamino] imidazole-4-carboxamide isomerase (Desulfatibacillum aliphaticivorans).